The chain runs to 204 residues: Urease accessory protein UreG (204 aa).

15 to 22 (GPVGSGKT) serves as a coordination point for GTP.

Belongs to the SIMIBI class G3E GTPase family. UreG subfamily. As to quaternary structure, homodimer. UreD, UreF and UreG form a complex that acts as a GTP-hydrolysis-dependent molecular chaperone, activating the urease apoprotein by helping to assemble the nickel containing metallocenter of UreC. The UreE protein probably delivers the nickel.

Its subcellular location is the cytoplasm. Functionally, facilitates the functional incorporation of the urease nickel metallocenter. This process requires GTP hydrolysis, probably effectuated by UreG. The protein is Urease accessory protein UreG of Methylobacterium sp. (strain 4-46).